The primary structure comprises 205 residues: MTDNVSAVILAGGASRRMGTDKSMLKLKGKKMIEIVIESISDIFDELVIVSNSPEKFDYKNNDFKVVSDKLTHLKRSSLRGIYTGLTEISNEYGFIFAGDMPFISPELIKAMISEMRKDKWDIIIPVISGHYEPLFAVYHKNCHYTMKQQLLHENFKITDSLKEFKVLELTDNYCVQYDEYLASFFNINTPEDLEQARKYLGKTE.

GTP contacts are provided by residues 10-12, lysine 22, aspartate 69, and aspartate 100; that span reads LAG. Aspartate 100 is a binding site for Mg(2+).

This sequence belongs to the MobA family. Mg(2+) is required as a cofactor.

It localises to the cytoplasm. It carries out the reaction Mo-molybdopterin + GTP + H(+) = Mo-molybdopterin guanine dinucleotide + diphosphate. Its function is as follows. Transfers a GMP moiety from GTP to Mo-molybdopterin (Mo-MPT) cofactor (Moco or molybdenum cofactor) to form Mo-molybdopterin guanine dinucleotide (Mo-MGD) cofactor. The protein is Probable molybdenum cofactor guanylyltransferase of Natranaerobius thermophilus (strain ATCC BAA-1301 / DSM 18059 / JW/NM-WN-LF).